A 404-amino-acid chain; its full sequence is Corticosteroid-binding globulin (404 aa).

Residues 1 to 22 (MLPTLYTCLLWLSTSGLWTVQA) form the signal peptide. N-linked (GlcNAc...) asparagine glycans are attached at residues asparagine 95, asparagine 119, and asparagine 175. Glutamine 253 serves as a coordination point for cortisol. N-linked (GlcNAc...) asparagine glycosylation occurs at asparagine 259. Glutamine 285 provides a ligand contact to cortisol. The N-linked (GlcNAc...) asparagine glycan is linked to asparagine 326. Position 392 (tryptophan 392) interacts with cortisol.

The protein belongs to the serpin family. Post-translationally, glycosylation in position Asn-259 is needed for steroid binding.

Its subcellular location is the secreted. Major transport protein for glucocorticoids and progestins in the blood of almost all vertebrate species. In Bos taurus (Bovine), this protein is Corticosteroid-binding globulin (SERPINA6).